Reading from the N-terminus, the 180-residue chain is Shikimate kinase (180 aa).

14-19 serves as a coordination point for ATP; sequence GAGKTC. Threonine 18 is a Mg(2+) binding site. Substrate-binding residues include aspartate 36, arginine 60, and glycine 82. Arginine 120 is a binding site for ATP. Arginine 139 provides a ligand contact to substrate.

It belongs to the shikimate kinase family. Monomer. The cofactor is Mg(2+).

The protein localises to the cytoplasm. It catalyses the reaction shikimate + ATP = 3-phosphoshikimate + ADP + H(+). It participates in metabolic intermediate biosynthesis; chorismate biosynthesis; chorismate from D-erythrose 4-phosphate and phosphoenolpyruvate: step 5/7. Catalyzes the specific phosphorylation of the 3-hydroxyl group of shikimic acid using ATP as a cosubstrate. The sequence is that of Shikimate kinase from Stenotrophomonas maltophilia (strain R551-3).